Consider the following 272-residue polypeptide: Ethanolamine ammonia-lyase small subunit (272 aa).

Val-161, Glu-182, and Cys-211 together coordinate adenosylcob(III)alamin.

The protein belongs to the EutC family. As to quaternary structure, the basic unit is a heterodimer which dimerizes to form tetramers. The heterotetramers trimerize; 6 large subunits form a core ring with 6 small subunits projecting outwards. The cofactor is adenosylcob(III)alamin.

It is found in the bacterial microcompartment. It catalyses the reaction ethanolamine = acetaldehyde + NH4(+). The protein operates within amine and polyamine degradation; ethanolamine degradation. In terms of biological role, catalyzes the deamination of various vicinal amino-alcohols to oxo compounds. Allows this organism to utilize ethanolamine as the sole source of nitrogen and carbon in the presence of external vitamin B12. The polypeptide is Ethanolamine ammonia-lyase small subunit (Xanthomonas campestris pv. campestris (strain ATCC 33913 / DSM 3586 / NCPPB 528 / LMG 568 / P 25)).